The sequence spans 941 residues: Pre-mRNA-processing factor 6 (941 aa).

The disordered stretch occupies residues 1-79 (MNKKKKPFLG…DEDLNDTNYD (79 aa)). Basic and acidic residues predominate over residues 39–65 (DANDPVDDRHAPPGKRTVGDQMKKNQA). The span at 66–78 (ADDDDEDLNDTNY) shows a compositional bias: acidic residues. Serine 143 is subject to Phosphoserine. Phosphothreonine occurs at positions 180, 266, and 275. The residue at position 279 (serine 279) is a Phosphoserine. HAT repeat units follow at residues 384–416 (TDIRAKKRVLRKALEHVPNSVRLWKAAVELEEP), 418–444 (DARIMLSRAVECCPTSVELWLALARLE), 445–476 (TYENARKVLNKARENIPTDRHIWITAAKLEEA), 554–586 (NALECARAIYAYALQVFPSKKSVWLRAAYFEKN), 588–620 (GTRESLEALLQRAVAHCPKAEVLWLMGAKSKWL), 622–654 (GDVPAARSILALAFQANPNSEEIWLAAVKLESE), 689–721 (GNISAAQELCEEALRHYEDFPKLWMMKGQIEEQ), 723–755 (ELMEKAREAYNQGLKKCPHSTPLWLLLSRLEEK), and 855–887 (RKITKAREWFHRTVKIDSDLGDAWAFFYKFELQ).

As to quaternary structure, identified in the spliceosome B complex. Identified in the spliceosome C complex. Associates with the U5 snRNP particle. Component of the U4/U6-U5 tri-snRNP complex composed of the U4, U6 and U5 snRNAs and at least PRPF3, PRPF4, PRPF6, PRPF8, PRPF31, SNRNP200, TXNL4A, SNRNP40, DDX23, CD2BP2, PPIH, SNU13, EFTUD2, SART1 and USP39, LSm proteins LSm2-8 and Sm proteins. Interacts with ARAF1. Interacts with AR and NR3C1, but not ESR1, independently of the presence of hormones. Interacts with USH1G. Phosphorylated by PRP4K during spliceosome assembly.

The protein localises to the nucleus. Its subcellular location is the nucleoplasm. It is found in the nucleus speckle. Its function is as follows. Involved in pre-mRNA splicing as component of the U4/U6-U5 tri-snRNP complex, one of the building blocks of the spliceosome. Enhances dihydrotestosterone-induced transactivation activity of AR, as well as dexamethasone-induced transactivation activity of NR3C1, but does not affect estrogen-induced transactivation. This chain is Pre-mRNA-processing factor 6 (Prpf6), found in Mus musculus (Mouse).